A 96-amino-acid chain; its full sequence is MSRPKKCRHLSSCVPCSLFKPNGIPSSELEKIQLEADEFEALNLGDVQKLSQLDAAASMGISRQTFGYLLASARRKVATAVTQGQALLLPLNVKKD.

It belongs to the UPF0251 family.

The sequence is that of UPF0251 protein Shal_3723 from Shewanella halifaxensis (strain HAW-EB4).